The primary structure comprises 167 residues: Cell number regulator 3 (167 aa).

A helical transmembrane segment spans residues 67–84 (GMTSCGTSAALFALIQWL).

Belongs to the cornifelin family. Expressed only in pollen.

The protein resides in the membrane. The sequence is that of Cell number regulator 3 (CNR3) from Zea mays (Maize).